The primary structure comprises 670 residues: Proline-rich receptor-like protein kinase PERK5 (670 aa).

Residues 1–181 (MADSPVDSSP…SGDSDSSSGN (181 aa)) form a disordered region. The Extracellular segment spans residues 1–186 (MADSPVDSSP…SSSGNHPQAN (186 aa)). Residues 14–31 (TSNGTPPSNGTSPSNESS) are compositionally biased toward low complexity. 2 N-linked (GlcNAc...) asparagine glycosylation sites follow: Asn-22 and Asn-28. Composition is skewed to pro residues over residues 32-62 (PPTP…PAPP) and 84-109 (PQTP…PPQT). N-linked (GlcNAc...) asparagine glycosylation occurs at Asn-130. The segment covering 132-141 (TNGGNNNRDG) has biased composition (low complexity). Asn-151 carries an N-linked (GlcNAc...) asparagine glycan. Low complexity predominate over residues 167-181 (SPPQNSGDSDSSSGN). Residues 187–207 (IGLIIGVLVGAGLLLLLAVCI) traverse the membrane as a helical segment. The Cytoplasmic portion of the chain corresponds to 208–670 (CICCNRKKKK…RGSMKRNPQL (463 aa)). The residue at position 301 (Thr-301) is a Phosphothreonine. A Protein kinase domain is found at 312–590 (FAQSNLLGQG…VRALEGDMSM (279 aa)). ATP-binding positions include 318-326 (LGQGGFGYV) and Lys-340. The residue at position 385 (Tyr-385) is a Phosphotyrosine. Asp-436 acts as the Proton acceptor in catalysis. Ser-469 carries the post-translational modification Phosphoserine. 2 positions are modified to phosphothreonine: Thr-470 and Thr-475. Phosphotyrosine is present on Tyr-483. Disordered stretches follow at residues 589-613 (SMDD…VSSE) and 635-670 (EYQS…NPQL). Over residues 599 to 613 (PGQSTYLSPGSVSSE) the composition is skewed to polar residues.

It belongs to the protein kinase superfamily. Ser/Thr protein kinase family. As to expression, mostly expressed in flower buds.

The protein localises to the cell membrane. It carries out the reaction L-seryl-[protein] + ATP = O-phospho-L-seryl-[protein] + ADP + H(+). The enzyme catalyses L-threonyl-[protein] + ATP = O-phospho-L-threonyl-[protein] + ADP + H(+). This is Proline-rich receptor-like protein kinase PERK5 (PERK5) from Arabidopsis thaliana (Mouse-ear cress).